The primary structure comprises 503 residues: Opine oxidase subunit A (503 aa).

To T-protein and to dimethylglycine dehydrogenase. As to quaternary structure, heterodimer of a subunit A and a subunit B.

Its pathway is opine metabolism; octopine degradation. Oxidative cleavage of octopine into L-arginine and pyruvate. In Agrobacterium tumefaciens (strain Ach5), this protein is Opine oxidase subunit A (ooxA).